The chain runs to 87 residues: Small ribosomal subunit protein eS21 (87 aa).

The protein belongs to the eukaryotic ribosomal protein eS21 family. In terms of assembly, component of the small ribosomal subunit. Mature ribosomes consist of a small (40S) and a large (60S) subunit. The 40S subunit contains about 33 different proteins and 1 molecule of RNA (18S). The 60S subunit contains about 49 different proteins and 3 molecules of RNA (25S, 5.8S and 5S).

The protein resides in the cytoplasm. Functionally, required for the processing of the 20S rRNA-precursor to mature 18S rRNA in a late step of the maturation of 40S ribosomal subunits. Has a physiological role leading to 18S rRNA stability. The sequence is that of Small ribosomal subunit protein eS21 (RPS21) from Kluyveromyces lactis (strain ATCC 8585 / CBS 2359 / DSM 70799 / NBRC 1267 / NRRL Y-1140 / WM37) (Yeast).